The chain runs to 128 residues: Small ribosomal subunit protein uS12 (128 aa).

3-methylthioaspartic acid is present on aspartate 89. The segment at 101–128 is disordered; the sequence is SLDTSGVADRRQGRSKYGAKRPKGAAAK. A compositionally biased stretch (basic residues) spans 113–128; that stretch reads GRSKYGAKRPKGAAAK.

Belongs to the universal ribosomal protein uS12 family. Part of the 30S ribosomal subunit. Contacts proteins S8 and S17. May interact with IF1 in the 30S initiation complex.

With S4 and S5 plays an important role in translational accuracy. Its function is as follows. Interacts with and stabilizes bases of the 16S rRNA that are involved in tRNA selection in the A site and with the mRNA backbone. Located at the interface of the 30S and 50S subunits, it traverses the body of the 30S subunit contacting proteins on the other side and probably holding the rRNA structure together. The combined cluster of proteins S8, S12 and S17 appears to hold together the shoulder and platform of the 30S subunit. This Prosthecochloris aestuarii (strain DSM 271 / SK 413) protein is Small ribosomal subunit protein uS12.